We begin with the raw amino-acid sequence, 175 residues long: Clathrin-associated protein AP-3 complex component APS3 (175 aa).

The protein belongs to the adaptor complexes small subunit family. As to quaternary structure, adaptor protein complex 3 (AP-3) is a heterotetramer composed of 2 large adaptins, a medium adaptin and a small adaptin.

Its subcellular location is the golgi apparatus. It is found in the cytoplasmic vesicle membrane. Its function is as follows. Part of the AP-3 complex, an adapter-related complex which is not clathrin-associated. The complex is associated with the Golgi region as well as more peripheral structures. It facilitates the budding of vesicles from the Golgi membrane. Involved in vacuolar trafficking and contributes to hyphal growth and pathogenesis. In Candida albicans (strain SC5314 / ATCC MYA-2876) (Yeast), this protein is Clathrin-associated protein AP-3 complex component APS3 (APS3).